A 472-amino-acid chain; its full sequence is LVPESSLFMHQSEDYETEVYPVSFTTEEMDATHKQLKDGLFLKQPDWTEYYVNIMRFVNFTSIHLRGCENLLENQPLMSRMRGMGFDIVLTDPFFPCGALVGNIFSIPVVNFLRGLPCGLDMKVNKCPSPPSYIPVPYSGNTNIMTFPQRVINMAMTVVESYQCSLLYGHYDEMVSKYVGNNMDYRTLLSHGALWLIRNEFTLDWPRPLLPNMVLIGGINCAEKKKNASLPADLEEFVQGSGDDGFIIFTLGSMLPDMPQEKAQHFLDAFRQIPQRVVWRYAGDPPKGLPKNVRLMKWLPQKELLAHPKAKLFLTHGGSHSVYEGICNAVPMLMFPLFAEQGDNGLRMVTRGAAETLNIYDVTSDNLLAALNKILKNKSYKEKITEMSQIHHDRPVAPLDLAIFWTEFVIRHKGASHLRVAAHELNWIQYHSLDVFGFILLILLTVLWVTLKCCLFCTRRCCRRGTAKTKSE.

3 N-linked (GlcNAc...) asparagine glycosylation sites follow: N59, N227, and N377. Residues 436–456 (FGFILLILLTVLWVTLKCCLF) traverse the membrane as a helical segment.

Belongs to the UDP-glycosyltransferase family.

It localises to the microsome membrane. The protein resides in the endoplasmic reticulum membrane. The catalysed reaction is glucuronate acceptor + UDP-alpha-D-glucuronate = acceptor beta-D-glucuronoside + UDP + H(+). Functionally, UDPGT is of major importance in the conjugation and subsequent elimination of potentially toxic xenobiotics and endogenous compounds. The protein is UDP-glucuronosyltransferase (ugt3) of Pleuronectes platessa (European plaice).